The following is a 539-amino-acid chain: Chaperonin GroEL (539 aa).

ATP-binding positions include 29 to 32 (TIGP), 86 to 90 (DGTTT), glycine 413, 476 to 478 (NAA), and aspartate 492.

It belongs to the chaperonin (HSP60) family. In terms of assembly, forms a cylinder of 14 subunits composed of two heptameric rings stacked back-to-back. Interacts with the co-chaperonin GroES.

It localises to the cytoplasm. The enzyme catalyses ATP + H2O + a folded polypeptide = ADP + phosphate + an unfolded polypeptide.. Together with its co-chaperonin GroES, plays an essential role in assisting protein folding. The GroEL-GroES system forms a nano-cage that allows encapsulation of the non-native substrate proteins and provides a physical environment optimized to promote and accelerate protein folding. The sequence is that of Chaperonin GroEL from Staphylococcus epidermidis.